A 181-amino-acid polypeptide reads, in one-letter code: Probable integrase/recombinase YoeC (181 aa).

Positions I3–K176 constitute a Tyr recombinase domain. Residues R40, K64, H128, R131, and H154 contribute to the active site. Y163 (O-(3'-phospho-DNA)-tyrosine intermediate) is an active-site residue.

This sequence belongs to the 'phage' integrase family.

The polypeptide is Probable integrase/recombinase YoeC (yoeC) (Bacillus subtilis (strain 168)).